The primary structure comprises 70 residues: UPF0150 protein TM_1311 (70 aa).

This sequence belongs to the UPF0150 family.

This chain is UPF0150 protein TM_1311, found in Thermotoga maritima (strain ATCC 43589 / DSM 3109 / JCM 10099 / NBRC 100826 / MSB8).